A 159-amino-acid chain; its full sequence is 2-C-methyl-D-erythritol 2,4-cyclodiphosphate synthase (159 aa).

A divalent metal cation contacts are provided by aspartate 8 and histidine 10. 4-CDP-2-C-methyl-D-erythritol 2-phosphate contacts are provided by residues 8–10 (DVH) and 34–35 (HS). Residue histidine 42 coordinates a divalent metal cation. Residues 56–58 (DIG), 61–65 (FPDTD), 100–106 (AQAPKML), 132–135 (TTTE), phenylalanine 139, and arginine 142 contribute to the 4-CDP-2-C-methyl-D-erythritol 2-phosphate site.

This sequence belongs to the IspF family. In terms of assembly, homotrimer. A divalent metal cation serves as cofactor.

The enzyme catalyses 4-CDP-2-C-methyl-D-erythritol 2-phosphate = 2-C-methyl-D-erythritol 2,4-cyclic diphosphate + CMP. It participates in isoprenoid biosynthesis; isopentenyl diphosphate biosynthesis via DXP pathway; isopentenyl diphosphate from 1-deoxy-D-xylulose 5-phosphate: step 4/6. Its function is as follows. Involved in the biosynthesis of isopentenyl diphosphate (IPP) and dimethylallyl diphosphate (DMAPP), two major building blocks of isoprenoid compounds. Catalyzes the conversion of 4-diphosphocytidyl-2-C-methyl-D-erythritol 2-phosphate (CDP-ME2P) to 2-C-methyl-D-erythritol 2,4-cyclodiphosphate (ME-CPP) with a corresponding release of cytidine 5-monophosphate (CMP). In Salmonella choleraesuis (strain SC-B67), this protein is 2-C-methyl-D-erythritol 2,4-cyclodiphosphate synthase.